Consider the following 77-residue polypeptide: DNA-directed RNA polymerase subunit omega (77 aa).

The protein belongs to the RNA polymerase subunit omega family. As to quaternary structure, the RNAP catalytic core consists of 2 alpha, 1 beta, 1 beta' and 1 omega subunit. When a sigma factor is associated with the core the holoenzyme is formed, which can initiate transcription.

It carries out the reaction RNA(n) + a ribonucleoside 5'-triphosphate = RNA(n+1) + diphosphate. Its function is as follows. Promotes RNA polymerase assembly. Latches the N- and C-terminal regions of the beta' subunit thereby facilitating its interaction with the beta and alpha subunits. The chain is DNA-directed RNA polymerase subunit omega from Nitratidesulfovibrio vulgaris (strain ATCC 29579 / DSM 644 / CCUG 34227 / NCIMB 8303 / VKM B-1760 / Hildenborough) (Desulfovibrio vulgaris).